We begin with the raw amino-acid sequence, 2104 residues long: Protein Ycf2 (2104 aa).

1396-1403 contributes to the ATP binding site; it reads GPVETGRS.

This sequence belongs to the Ycf2 family.

It is found in the plastid. The protein resides in the chloroplast stroma. Its function is as follows. Probable ATPase of unknown function. Its presence in a non-photosynthetic plant (Epifagus virginiana) and experiments in tobacco indicate that it has an essential function which is probably not related to photosynthesis. The polypeptide is Protein Ycf2 (ycf2-A) (Adiantum capillus-veneris (Maidenhair fern)).